Consider the following 338-residue polypeptide: Methionine import ATP-binding protein MetN (338 aa).

The 240-residue stretch at 2 to 241 (ISLDGIRKVF…PKEHITKEFV (240 aa)) folds into the ABC transporter domain. 38-45 (GYSGAGKS) contributes to the ATP binding site.

This sequence belongs to the ABC transporter superfamily. Methionine importer (TC 3.A.1.24) family. As to quaternary structure, the complex is composed of two ATP-binding proteins (MetN), two transmembrane proteins (MetI) and a solute-binding protein (MetQ).

The protein resides in the cell membrane. It carries out the reaction L-methionine(out) + ATP + H2O = L-methionine(in) + ADP + phosphate + H(+). The catalysed reaction is D-methionine(out) + ATP + H2O = D-methionine(in) + ADP + phosphate + H(+). Its function is as follows. Part of the ABC transporter complex MetNIQ involved in methionine import. Responsible for energy coupling to the transport system. This Halalkalibacterium halodurans (strain ATCC BAA-125 / DSM 18197 / FERM 7344 / JCM 9153 / C-125) (Bacillus halodurans) protein is Methionine import ATP-binding protein MetN.